A 689-amino-acid chain; its full sequence is Dipeptidyl aminopeptidase BIII (689 aa).

The N-terminal stretch at 1-26 (MRHPAFRLTLLASTVAFALAPQAAQA) is a signal peptide. Catalysis depends on charge relay system residues Ser-506, Asp-593, and His-625.

It belongs to the peptidase S9C family. In terms of assembly, monomer.

With respect to regulation, strongly inhibited by the serine protease inhibitor diisopropyl fluorophosphate (DFP), chymostatin, leupeptin, 0.5 mM ZnCl(2), 10 mM o-phenanthlorine and N-tosyl-L-phenyl-alanyl chloromethyl ketone (TPCK), but not by N-tosyl-L-lysyl chloromethyl ketone (TLCK). Activity is not affected significantly by iodoacetate (IAA), L-trans-epoxysuccinyl-leucylamido(4-guanido)butane (E64), pepstatin A and phenylmethanesulfonyl fluoride (PMSF). Activity is stimulated by addition of 0.5 mM CaCl(2), 10 mM EDTA and N-ethylmaleimide (NEM). In terms of biological role, exopeptidase that catalyzes the removal of dipeptide units (NH2-P2-P1- or -P1'-P2'-COOH) from the free amino or carboxy termini. Prefers substrates composed of bulky, hydrophobic amino acids at P1 and P1' positions. Has endopeptidase activity on N-terminally blocked peptide derivatives which contain aromatic amino acid residue at the P1 position. Exopeptidase activity is much higher than its endopeptidase activity. The polypeptide is Dipeptidyl aminopeptidase BIII (Pseudoxanthomonas mexicana).